Consider the following 177-residue polypeptide: Large ribosomal subunit protein uL6 (177 aa).

Belongs to the universal ribosomal protein uL6 family. Part of the 50S ribosomal subunit.

In terms of biological role, this protein binds to the 23S rRNA, and is important in its secondary structure. It is located near the subunit interface in the base of the L7/L12 stalk, and near the tRNA binding site of the peptidyltransferase center. The sequence is that of Large ribosomal subunit protein uL6 from Rhizobium etli (strain ATCC 51251 / DSM 11541 / JCM 21823 / NBRC 15573 / CFN 42).